Reading from the N-terminus, the 199-residue chain is Holliday junction branch migration complex subunit RuvA (199 aa).

The domain I stretch occupies residues 1–63 (MIGKLNGKID…EEHIHLYGFL (63 aa)). The tract at residues 64-141 (TLEEKNFFNL…TKIFSSSAII (78 aa)) is domain II. Positions 141–145 (IKDSN) are flexible linker. Residues 146–199 (ISSIAINEVMKALVNLGFTRFEAQNTVQGIITQNPKISIDELIKTALKNRNSSF) form a domain III region.

This sequence belongs to the RuvA family. In terms of assembly, homotetramer. Forms an RuvA(8)-RuvB(12)-Holliday junction (HJ) complex. HJ DNA is sandwiched between 2 RuvA tetramers; dsDNA enters through RuvA and exits via RuvB. An RuvB hexamer assembles on each DNA strand where it exits the tetramer. Each RuvB hexamer is contacted by two RuvA subunits (via domain III) on 2 adjacent RuvB subunits; this complex drives branch migration. In the full resolvosome a probable DNA-RuvA(4)-RuvB(12)-RuvC(2) complex forms which resolves the HJ.

The protein resides in the cytoplasm. In terms of biological role, the RuvA-RuvB-RuvC complex processes Holliday junction (HJ) DNA during genetic recombination and DNA repair, while the RuvA-RuvB complex plays an important role in the rescue of blocked DNA replication forks via replication fork reversal (RFR). RuvA specifically binds to HJ cruciform DNA, conferring on it an open structure. The RuvB hexamer acts as an ATP-dependent pump, pulling dsDNA into and through the RuvAB complex. HJ branch migration allows RuvC to scan DNA until it finds its consensus sequence, where it cleaves and resolves the cruciform DNA. The sequence is that of Holliday junction branch migration complex subunit RuvA from Rickettsia prowazekii (strain Madrid E).